A 27-amino-acid chain; its full sequence is Nucleoside diphosphate kinase 2 (27 aa).

An ATP-binding site is contributed by Lys3.

The protein belongs to the NDK family. Mg(2+) serves as cofactor.

It carries out the reaction a 2'-deoxyribonucleoside 5'-diphosphate + ATP = a 2'-deoxyribonucleoside 5'-triphosphate + ADP. The enzyme catalyses a ribonucleoside 5'-diphosphate + ATP = a ribonucleoside 5'-triphosphate + ADP. Functionally, major role in the synthesis of nucleoside triphosphates other than ATP. The ATP gamma phosphate is transferred to the NDP beta phosphate via a ping-pong mechanism, using a phosphorylated active-site intermediate. In Pseudotsuga menziesii (Douglas-fir), this protein is Nucleoside diphosphate kinase 2.